We begin with the raw amino-acid sequence, 166 residues long: Specificity protein transcription factor 2 (166 aa).

A disordered region spans residues 17 to 45; it reads SYHHSLPSISPPDSPASTSASSSSSSIGA. Positions 31 to 42 are enriched in low complexity; sequence PASTSASSSSSS. C2H2-type zinc fingers lie at residues 77 to 101, 107 to 131, and 137 to 160; these read HLCSVPGCGKTYKKTSHLRAHLRKH, FVCDWFDCGKRFDRSDQLIRHKRTH, and FACKFCIRQFSRSDHLQQHLTSVH.

This sequence belongs to the Sp1 C2H2-type zinc-finger protein family.

Transcription factor. Probably acts downstream of the Wnt signaling pathway. This is Specificity protein transcription factor 2 from Caenorhabditis elegans.